The sequence spans 388 residues: Chorismate synthase (388 aa).

NADP(+) contacts are provided by Arg-39 and Arg-45. Residues 130-132 (RSS), 251-252 (NA), Gly-296, 311-315 (KPIPT), and Arg-337 contribute to the FMN site.

This sequence belongs to the chorismate synthase family. As to quaternary structure, homotetramer. Requires FMNH2 as cofactor.

The catalysed reaction is 5-O-(1-carboxyvinyl)-3-phosphoshikimate = chorismate + phosphate. The protein operates within metabolic intermediate biosynthesis; chorismate biosynthesis; chorismate from D-erythrose 4-phosphate and phosphoenolpyruvate: step 7/7. In terms of biological role, catalyzes the anti-1,4-elimination of the C-3 phosphate and the C-6 proR hydrogen from 5-enolpyruvylshikimate-3-phosphate (EPSP) to yield chorismate, which is the branch point compound that serves as the starting substrate for the three terminal pathways of aromatic amino acid biosynthesis. This reaction introduces a second double bond into the aromatic ring system. The sequence is that of Chorismate synthase from Streptococcus pyogenes serotype M5 (strain Manfredo).